Consider the following 602-residue polypeptide: Potassium voltage-gated channel subfamily A member 5 (602 aa).

Residues 1 to 202 form a tetramerization domain region; that stretch reads MEISLVPLEN…FYQLGDEAME (202 aa). The Cytoplasmic portion of the chain corresponds to 1–238; it reads MEISLVPLEN…LIFEYPESSG (238 aa). The segment at 58 to 107 is disordered; it reads EDANQGGRPLPPMAQELPQPRRLSAEDEEGEGDPGLGTVEEDQAPQDAGS. Ser81 carries the post-translational modification Phosphoserine; by CK2 and PKA. Lys212 participates in a covalent cross-link: Glycyl lysine isopeptide (Lys-Gly) (interchain with G-Cter in SUMO). A helical transmembrane segment spans residues 239–260; that stretch reads SARAIAIVSVLVILISIITFCL. Topologically, residues 261 to 314 are extracellular; it reads ETLPEFRDERELLRHPPVPPQPPAPAPGINGSVSGALSSGPTVAPLLPRTLADP. A helical transmembrane segment spans residues 315-336; it reads FFIVETTCVIWFTFELLVRFFA. Residue Cys337 is the site of S-palmitoyl cysteine attachment. Residues 337 to 347 lie on the Cytoplasmic side of the membrane; the sequence is CPSKAEFSRNI. A helical transmembrane segment spans residues 348-368; the sequence is MNIIDVVAIFPYFITLGTELA. The Extracellular segment spans residues 369–384; that stretch reads EQQPGGGGQNGQQAMS. The chain crosses the membrane as a helical; Voltage-sensor span at residues 385 to 405; the sequence is LAILRVIRLVRVFRIFKLSRH. Over 406–420 the chain is Cytoplasmic; sequence SKGLQILGKTLQASM. An S4-S5 linker region spans residues 407–420; sequence KGLQILGKTLQASM. A helical transmembrane segment spans residues 421–442; sequence RELGLLIFFLFIGVILFSSAVY. The Extracellular segment spans residues 443-456; the sequence is FAEADNHGSHFSSI. Positions 457-468 form an intramembrane region, helical; that stretch reads PDAFWWAVVTMT. The Selectivity filter signature appears at 469 to 474; sequence TVGYGD. Residues 469–476 lie within the membrane without spanning it; it reads TVGYGDMR. Over 477–483 the chain is Extracellular; it reads PITVGGK. A helical transmembrane segment spans residues 484-512; sequence IVGSLCAIAGVLTIALPVPVIVSNFNYFY. The Cytoplasmic segment spans residues 513–602; that stretch reads HRETDHEEQA…CLDTSRETDL (90 aa). A compositionally biased stretch (basic and acidic residues) spans 523–536; sequence ALKEEQGNQRRESG. Residues 523–543 are disordered; the sequence is ALKEEQGNQRRESGLDTGGQR. Lys525 participates in a covalent cross-link: Glycyl lysine isopeptide (Lys-Gly) (interchain with G-Cter in SUMO). Phosphoserine; by PKA occurs at positions 535, 546, and 569. The PDZ-binding signature appears at 600 to 602; it reads TDL.

Belongs to the potassium channel family. A (Shaker) (TC 1.A.1.2) subfamily. Kv1.5/KCNA5 sub-subfamily. Homotetramer and heterotetramer of potassium channel proteins. Interacts with DLG1, which enhances channel currents. Forms a ternary complex with DLG1 and CAV3. Interacts with KCNAB1. Interacts with UBE2I. Interacts with XIRP2; the interaction is required for normal action potential configuration in the heart. Post-translationally, glycosylated. In terms of processing, sumoylated on Lys-212, and Lys-525, preferentially with SUMO3. Sumoylation regulates the voltage sensitivity of the channel. Expressed equally in atrium, ventricle, aorta and skeletal muscle. Weaker expression in brain.

The protein resides in the cell membrane. It catalyses the reaction K(+)(in) = K(+)(out). Voltage-gated potassium channel that mediates transmembrane potassium transport in excitable membranes. Forms tetrameric potassium-selective channels through which potassium ions pass in accordance with their electrochemical gradient. The channel alternates between opened and closed conformations in response to the voltage difference across the membrane. Can form functional homotetrameric channels and heterotetrameric channels that contain variable proportions of KCNA1, KCNA2, KCNA4, KCNA5, and possibly other family members as well; channel properties depend on the type of alpha subunits that are part of the channel. Channel properties are modulated by cytoplasmic beta subunits that regulate the subcellular location of the alpha subunits and promote rapid inactivation. Homotetrameric channels display rapid activation and slow inactivation. Required for normal electrical conduction including formation of the infranodal ventricular conduction system and normal action potential configuration, as a result of its interaction with XIRP2. May play a role in regulating the secretion of insulin in normal pancreatic islets. This chain is Potassium voltage-gated channel subfamily A member 5 (Kcna5), found in Rattus norvegicus (Rat).